A 282-amino-acid chain; its full sequence is NH(3)-dependent NAD(+) synthetase (282 aa).

Residue 51–58 participates in ATP binding; it reads GISGGVDS. D57 contacts Mg(2+). R148 contacts deamido-NAD(+). T168 is an ATP binding site. E173 is a Mg(2+) binding site. The deamido-NAD(+) site is built by K181 and D188. The ATP site is built by K197 and T219. A deamido-NAD(+)-binding site is contributed by 268–269; sequence HK.

It belongs to the NAD synthetase family. Homodimer.

The catalysed reaction is deamido-NAD(+) + NH4(+) + ATP = AMP + diphosphate + NAD(+) + H(+). It functions in the pathway cofactor biosynthesis; NAD(+) biosynthesis; NAD(+) from deamido-NAD(+) (ammonia route): step 1/1. In terms of biological role, catalyzes the ATP-dependent amidation of deamido-NAD to form NAD. Uses ammonia as a nitrogen source. This chain is NH(3)-dependent NAD(+) synthetase, found in Burkholderia ambifaria (strain MC40-6).